Consider the following 472-residue polypeptide: Probable dipeptidase A (472 aa).

Cys-10 is a catalytic residue.

The protein belongs to the peptidase C69 family.

It carries out the reaction an L-aminoacyl-L-amino acid + H2O = 2 an L-alpha-amino acid. This chain is Probable dipeptidase A (pepDA), found in Streptococcus pyogenes serotype M1.